Reading from the N-terminus, the 348-residue chain is MDLGNSGNDSVVTKFVLLGLTETAALQPILFVIFLLAYVTTIGGTLSILAAILMETKLHSPMYFFLGNLSLPDVGCVSVTVPAMLSHFISNDRSIPYKACLSELFFFHLLAGADCFLLTIMAYDRYLAICQSLTYSSRMSWGIQQALVGMSCVFSFTNALTQTVALSPLNFCGPNVINHFYCDLPQPFQLSCSSVHLNGQLLFVAAAFMGVAPLVLITVSYAHVAAAVLRIRSAEGRKKAFSTCSSHLTVVGIFYGTGVFSYTRLGSVESSDKDKGIGILNTVISPMLNPLIYWTSLLDVGCISHCSSDAGVSPGPPVQSSLCCLQFTALLSPPPGWGGLSPLNSHGL.

Over 1 to 28 (MDLGNSGNDSVVTKFVLLGLTETAALQP) the chain is Extracellular. N8 is a glycosylation site (N-linked (GlcNAc...) asparagine). The helical transmembrane segment at 29–52 (ILFVIFLLAYVTTIGGTLSILAAI) threads the bilayer. Over 53-60 (LMETKLHS) the chain is Cytoplasmic. A helical transmembrane segment spans residues 61–82 (PMYFFLGNLSLPDVGCVSVTVP). Topologically, residues 83–103 (AMLSHFISNDRSIPYKACLSE) are extracellular. An intrachain disulfide couples C100 to C192. The helical transmembrane segment at 104 to 123 (LFFFHLLAGADCFLLTIMAY) threads the bilayer. Residues 124-143 (DRYLAICQSLTYSSRMSWGI) are Cytoplasmic-facing. Residues 144–161 (QQALVGMSCVFSFTNALT) form a helical membrane-spanning segment. Topologically, residues 162–199 (QTVALSPLNFCGPNVINHFYCDLPQPFQLSCSSVHLNG) are extracellular. The helical transmembrane segment at 200-222 (QLLFVAAAFMGVAPLVLITVSYA) threads the bilayer. Residues 223-239 (HVAAAVLRIRSAEGRKK) are Cytoplasmic-facing. The chain crosses the membrane as a helical span at residues 240 to 262 (AFSTCSSHLTVVGIFYGTGVFSY). The Extracellular portion of the chain corresponds to 263 to 275 (TRLGSVESSDKDK). Residues 276 to 295 (GIGILNTVISPMLNPLIYWT) form a helical membrane-spanning segment. Over 296–348 (SLLDVGCISHCSSDAGVSPGPPVQSSLCCLQFTALLSPPPGWGGLSPLNSHGL) the chain is Cytoplasmic.

The protein belongs to the G-protein coupled receptor 1 family.

Its subcellular location is the cell membrane. Functionally, odorant receptor. This Homo sapiens (Human) protein is Putative olfactory receptor 3A4 (OR3A4P).